Consider the following 230-residue polypeptide: 6-carboxyhexanoate--CoA ligase (230 aa).

The protein belongs to the BioW family. Homodimer. The cofactor is Mg(2+).

The catalysed reaction is heptanedioate + ATP + CoA = 6-carboxyhexanoyl-CoA + AMP + diphosphate. Its pathway is metabolic intermediate metabolism; pimeloyl-CoA biosynthesis; pimeloyl-CoA from pimelate: step 1/1. Functionally, catalyzes the transformation of pimelate into pimeloyl-CoA with concomitant hydrolysis of ATP to AMP. This is 6-carboxyhexanoate--CoA ligase from Staphylococcus aureus (strain MSSA476).